The sequence spans 577 residues: Arginine--tRNA ligase (577 aa).

Residues 122-132 (PNVAKEMHVGH) carry the 'HIGH' region motif.

It belongs to the class-I aminoacyl-tRNA synthetase family. In terms of assembly, monomer.

It is found in the cytoplasm. The catalysed reaction is tRNA(Arg) + L-arginine + ATP = L-arginyl-tRNA(Arg) + AMP + diphosphate. The protein is Arginine--tRNA ligase of Haemophilus influenzae (strain 86-028NP).